Consider the following 162-residue polypeptide: UPF0260 protein Caul_3920 (162 aa).

The protein belongs to the UPF0260 family.

This chain is UPF0260 protein Caul_3920, found in Caulobacter sp. (strain K31).